A 242-amino-acid polypeptide reads, in one-letter code: Biosynthetic peptidoglycan transglycosylase (242 aa).

A helical membrane pass occupies residues 21-41 (VALVVFWGGGIALFSVVPVPF).

Belongs to the glycosyltransferase 51 family.

It is found in the cell inner membrane. It carries out the reaction [GlcNAc-(1-&gt;4)-Mur2Ac(oyl-L-Ala-gamma-D-Glu-L-Lys-D-Ala-D-Ala)](n)-di-trans,octa-cis-undecaprenyl diphosphate + beta-D-GlcNAc-(1-&gt;4)-Mur2Ac(oyl-L-Ala-gamma-D-Glu-L-Lys-D-Ala-D-Ala)-di-trans,octa-cis-undecaprenyl diphosphate = [GlcNAc-(1-&gt;4)-Mur2Ac(oyl-L-Ala-gamma-D-Glu-L-Lys-D-Ala-D-Ala)](n+1)-di-trans,octa-cis-undecaprenyl diphosphate + di-trans,octa-cis-undecaprenyl diphosphate + H(+). The protein operates within cell wall biogenesis; peptidoglycan biosynthesis. In terms of biological role, peptidoglycan polymerase that catalyzes glycan chain elongation from lipid-linked precursors. The polypeptide is Biosynthetic peptidoglycan transglycosylase (Salmonella arizonae (strain ATCC BAA-731 / CDC346-86 / RSK2980)).